A 310-amino-acid polypeptide reads, in one-letter code: HPr kinase/phosphorylase (310 aa).

Residues His138 and Lys159 contribute to the active site. 153-160 (GDSGIGKS) is a binding site for ATP. A Mg(2+)-binding site is contributed by Ser160. Residue Asp177 is the Proton acceptor; for phosphorylation activity. Proton donor; for dephosphorylation activity of the active site. The segment at 201-210 (LEIRGVGIID) is important for the catalytic mechanism of both phosphorylation and dephosphorylation. Glu202 lines the Mg(2+) pocket. The active site involves Arg243. Residues 264-269 (PVKTGR) form an important for the catalytic mechanism of dephosphorylation region.

Belongs to the HPrK/P family. In terms of assembly, homohexamer. It depends on Mg(2+) as a cofactor.

It catalyses the reaction [HPr protein]-L-serine + ATP = [HPr protein]-O-phospho-L-serine + ADP + H(+). The catalysed reaction is [HPr protein]-O-phospho-L-serine + phosphate + H(+) = [HPr protein]-L-serine + diphosphate. Catalyzes the ATP- as well as the pyrophosphate-dependent phosphorylation of a specific serine residue in HPr, a phosphocarrier protein of the phosphoenolpyruvate-dependent sugar phosphotransferase system (PTS). HprK/P also catalyzes the pyrophosphate-producing, inorganic phosphate-dependent dephosphorylation (phosphorolysis) of seryl-phosphorylated HPr (P-Ser-HPr). The two antagonistic activities of HprK/P are regulated by several intracellular metabolites, which change their concentration in response to the absence or presence of rapidly metabolisable carbon sources (glucose, fructose, etc.) in the growth medium. Therefore, by controlling the phosphorylation state of HPr, HPrK/P is a sensor enzyme that plays a major role in the regulation of carbon metabolism and sugar transport: it mediates carbon catabolite repression (CCR), and regulates PTS-catalyzed carbohydrate uptake and inducer exclusion. The protein is HPr kinase/phosphorylase (hprK) of Streptococcus pyogenes serotype M1.